We begin with the raw amino-acid sequence, 160 residues long: Prostaglandin E synthase 3 (160 aa).

The CS domain maps to 1–90 (MQPASAKWYD…ESGQSWPRLT (90 aa)). K33 is subject to N6-acetyllysine. K35 is covalently cross-linked (Glycyl lysine isopeptide (Lys-Gly) (interchain with G-Cter in SUMO2)). The residue at position 44 (S44) is a Phosphoserine. Residue K65 forms a Glycyl lysine isopeptide (Lys-Gly) (interchain with G-Cter in SUMO2) linkage. A phosphoserine mark is found at S85, S100, S113, S118, S148, and S151. The interval 124 to 160 (SEMMNNMGGDEDVDLPEVDGADDDSQDSDDEKMPDLE) is disordered. Over residues 132–153 (GDEDVDLPEVDGADDDSQDSDD) the composition is skewed to acidic residues. The PXLE motif signature appears at 157 to 160 (PDLE).

It belongs to the p23/wos2 family. In terms of assembly, probably forms a complex composed of chaperones HSP90 and HSP70, co-chaperones STIP1/HOP, CDC37, PPP5C, PTGES3/p23, TSC1 and client protein TSC2. Binds to the progesterone receptor. Interacts with TERT; the interaction, together with HSP90AA1, is required for correct assembly and stabilization of the telomerase holoenzyme complex. Interacts (via PXLE motif) with EGLN1/PHD2, recruiting EGLN1/PHD2 to the HSP90 pathway to facilitate HIF alpha proteins hydroxylation. Interacts with HSP90AA1, FLCN, FNIP1 and FNIP2. Post-translationally, proteolytically cleaved by caspase-7 (CASP7) in response to apoptosis, leading to its inactivation. Detected in testis and ovary, at lower levels in endometrium, myometrium, kidney and lung, and only faintly in spleen, heart and muscle (at protein level). Expressed at high levels in glandular and luminal epithelial cells of the endometrium, but also detected in stromal cells (at protein level).

It is found in the cytoplasm. The catalysed reaction is prostaglandin H2 = prostaglandin E2. It functions in the pathway lipid metabolism; prostaglandin biosynthesis. Cytosolic prostaglandin synthase that catalyzes the oxidoreduction of prostaglandin endoperoxide H2 (PGH2) to prostaglandin E2 (PGE2). Molecular chaperone that localizes to genomic response elements in a hormone-dependent manner and disrupts receptor-mediated transcriptional activation, by promoting disassembly of transcriptional regulatory complexes. Facilitates HIF alpha proteins hydroxylation via interaction with EGLN1/PHD2, leading to recruit EGLN1/PHD2 to the HSP90 pathway. The chain is Prostaglandin E synthase 3 (PTGES3) from Bos taurus (Bovine).